The following is a 336-amino-acid chain: Ornithine carbamoyltransferase, catabolic (336 aa).

Carbamoyl phosphate-binding positions include 57–60, Gln84, Arg108, and 135–138; these read STRT and HPTQ. L-ornithine-binding positions include Asn168, Asp232, and 236–237; that span reads SM. Carbamoyl phosphate-binding positions include 274–275 and Arg321; that span reads CL.

It belongs to the aspartate/ornithine carbamoyltransferase superfamily. OTCase family. Nonameric or dodecamer (tetramer of trimers).

The protein resides in the cytoplasm. It carries out the reaction carbamoyl phosphate + L-ornithine = L-citrulline + phosphate + H(+). The protein operates within amino-acid degradation; L-arginine degradation via ADI pathway; carbamoyl phosphate from L-arginine: step 2/2. Inhibited by 2-aminopentanoic acid (norvaline). Activated by phosphate and nucleoside monophosphates such as AMP, GMP, CMP, UMP. Allosterically inhibited by the polyamines such as spermidine and putrescine. Involved in the catabolism of arginine. Catalyzes the phosphorolysis of citrulline, the reverse reaction of the biosynthetic one, yielding ornithine and carbamoyl phosphate which serve to generate ATP from ADP. This catabolic OTCase does not carry out the biosynthetic reaction because of a poor affinity and a marked cooperativity for carbamoyl phosphate. The protein is Ornithine carbamoyltransferase, catabolic of Pseudomonas aeruginosa (strain ATCC 15692 / DSM 22644 / CIP 104116 / JCM 14847 / LMG 12228 / 1C / PRS 101 / PAO1).